Here is a 468-residue protein sequence, read N- to C-terminus: Uronate isomerase (468 aa).

Belongs to the metallo-dependent hydrolases superfamily. Uronate isomerase family.

It carries out the reaction D-glucuronate = D-fructuronate. The enzyme catalyses aldehydo-D-galacturonate = keto-D-tagaturonate. Its pathway is carbohydrate metabolism; pentose and glucuronate interconversion. In Lachnospira eligens (strain ATCC 27750 / DSM 3376 / VPI C15-48 / C15-B4) (Eubacterium eligens), this protein is Uronate isomerase.